A 295-amino-acid chain; its full sequence is GTPase Era (295 aa).

One can recognise an Era-type G domain in the interval 4-171 (KSGFVTIIGR…IKQIVSFLPE (168 aa)). The segment at 12–19 (GRPNVGKS) is G1. 12–19 (GRPNVGKS) contributes to the GTP binding site. Positions 38–42 (QTTRN) are G2. The tract at residues 59-62 (DTPG) is G3. GTP-binding positions include 59 to 63 (DTPGI) and 121 to 124 (NKID). The tract at residues 121 to 124 (NKID) is G4. The G5 stretch occupies residues 150 to 152 (ISA). The KH type-2 domain occupies 202 to 280 (LDQEIPHGIA…FLELWVKVNE (79 aa)).

The protein belongs to the TRAFAC class TrmE-Era-EngA-EngB-Septin-like GTPase superfamily. Era GTPase family. Monomer.

The protein resides in the cytoplasm. Its subcellular location is the cell membrane. Its function is as follows. An essential GTPase that binds both GDP and GTP, with rapid nucleotide exchange. Plays a role in 16S rRNA processing and 30S ribosomal subunit biogenesis and possibly also in cell cycle regulation and energy metabolism. This chain is GTPase Era, found in Alkaliphilus metalliredigens (strain QYMF).